A 1414-amino-acid chain; its full sequence is DNA-directed RNA polymerase subunit beta' (1414 aa).

Residues cysteine 70, cysteine 72, cysteine 85, and cysteine 88 each contribute to the Zn(2+) site. Positions 460, 462, and 464 each coordinate Mg(2+). Residues cysteine 814, cysteine 888, cysteine 895, and cysteine 898 each coordinate Zn(2+). Positions 1392–1403 are enriched in low complexity; that stretch reads EQALSEALKSSA. The tract at residues 1392-1414 is disordered; that stretch reads EQALSEALKSSAPQEAKAAQKDE.

It belongs to the RNA polymerase beta' chain family. In terms of assembly, the RNAP catalytic core consists of 2 alpha, 1 beta, 1 beta' and 1 omega subunit. When a sigma factor is associated with the core the holoenzyme is formed, which can initiate transcription. It depends on Mg(2+) as a cofactor. Zn(2+) is required as a cofactor.

The catalysed reaction is RNA(n) + a ribonucleoside 5'-triphosphate = RNA(n+1) + diphosphate. DNA-dependent RNA polymerase catalyzes the transcription of DNA into RNA using the four ribonucleoside triphosphates as substrates. In Coxiella burnetii (strain RSA 331 / Henzerling II), this protein is DNA-directed RNA polymerase subunit beta'.